A 128-amino-acid polypeptide reads, in one-letter code: Gastrotropin (128 aa).

Residue Ala2 is modified to N-acetylalanine.

It belongs to the calycin superfamily. Fatty-acid binding protein (FABP) family. Found exclusively in the ileum and to a lesser extent in distal jejunum.

The protein resides in the cytoplasm. The protein localises to the membrane. Binds to bile acids and is involved in enterohepatic bile acid metabolism. Required for efficient apical to basolateral transport of conjugated bile acids in ileal enterocytes. Stimulates gastric acid and pepsinogen secretion. The protein is Gastrotropin (FABP6) of Sus scrofa (Pig).